We begin with the raw amino-acid sequence, 219 residues long: Small ribosomal subunit protein uS3c (219 aa).

A KH type-2 domain is found at 47-118 (IKKNIRISSG…KINIAITRIT (72 aa)).

The protein belongs to the universal ribosomal protein uS3 family. In terms of assembly, part of the 30S ribosomal subunit.

It localises to the plastid. It is found in the chloroplast. In Citrus sinensis (Sweet orange), this protein is Small ribosomal subunit protein uS3c (rps3).